A 203-amino-acid polypeptide reads, in one-letter code: MRGTLYIVAAPSGAGKSSIVNATLARDPKIALSISFTSRAPRPGERHAEHYHFVSAEEFQGMIEAGDFFEYALVHGDWKGTARQSVEPQLAAGHDVLLEIDWQGARQVRQKVPDAVSVFILPPSRQALDERMRKRGQDSEDVMAQRLAAAREEMLHFEEFDYVIINETFDTAVSEMCAIFTASRLRRQAQQQRHAGLIQALLD.

Positions 3-181 (GTLYIVAAPS…AVSEMCAIFT (179 aa)) constitute a Guanylate kinase-like domain. Residue 10 to 17 (APSGAGKS) participates in ATP binding.

It belongs to the guanylate kinase family.

It localises to the cytoplasm. The enzyme catalyses GMP + ATP = GDP + ADP. Its function is as follows. Essential for recycling GMP and indirectly, cGMP. The chain is Guanylate kinase from Xanthomonas campestris pv. campestris (strain 8004).